We begin with the raw amino-acid sequence, 282 residues long: Pantothenate synthetase (282 aa).

M30–H37 contacts ATP. H37 serves as the catalytic Proton donor. Q61 contributes to the (R)-pantoate binding site. Residue Q61 participates in beta-alanine binding. Residue G147–D150 participates in ATP binding. Q153 is a binding site for (R)-pantoate. Residues V176 and L184 to R187 each bind ATP.

It belongs to the pantothenate synthetase family. As to quaternary structure, homodimer.

It localises to the cytoplasm. The enzyme catalyses (R)-pantoate + beta-alanine + ATP = (R)-pantothenate + AMP + diphosphate + H(+). The protein operates within cofactor biosynthesis; (R)-pantothenate biosynthesis; (R)-pantothenate from (R)-pantoate and beta-alanine: step 1/1. Functionally, catalyzes the condensation of pantoate with beta-alanine in an ATP-dependent reaction via a pantoyl-adenylate intermediate. In Bacteroides fragilis (strain YCH46), this protein is Pantothenate synthetase.